Consider the following 311-residue polypeptide: Methionyl-tRNA formyltransferase (311 aa).

112 to 115 (SLLP) is a (6S)-5,6,7,8-tetrahydrofolate binding site.

This sequence belongs to the Fmt family.

It carries out the reaction L-methionyl-tRNA(fMet) + (6R)-10-formyltetrahydrofolate = N-formyl-L-methionyl-tRNA(fMet) + (6S)-5,6,7,8-tetrahydrofolate + H(+). In terms of biological role, attaches a formyl group to the free amino group of methionyl-tRNA(fMet). The formyl group appears to play a dual role in the initiator identity of N-formylmethionyl-tRNA by promoting its recognition by IF2 and preventing the misappropriation of this tRNA by the elongation apparatus. The polypeptide is Methionyl-tRNA formyltransferase (Geobacter metallireducens (strain ATCC 53774 / DSM 7210 / GS-15)).